A 449-amino-acid chain; its full sequence is Exodeoxyribonuclease 7 large subunit (449 aa).

It belongs to the XseA family. As to quaternary structure, heterooligomer composed of large and small subunits.

The protein resides in the cytoplasm. The enzyme catalyses Exonucleolytic cleavage in either 5'- to 3'- or 3'- to 5'-direction to yield nucleoside 5'-phosphates.. Functionally, bidirectionally degrades single-stranded DNA into large acid-insoluble oligonucleotides, which are then degraded further into small acid-soluble oligonucleotides. The protein is Exodeoxyribonuclease 7 large subunit of Salmonella paratyphi B (strain ATCC BAA-1250 / SPB7).